The sequence spans 293 residues: Ribosomal RNA small subunit methyltransferase A (293 aa).

S-adenosyl-L-methionine-binding residues include asparagine 33, valine 35, glycine 60, glutamate 81, aspartate 111, and asparagine 130.

It belongs to the class I-like SAM-binding methyltransferase superfamily. rRNA adenine N(6)-methyltransferase family. RsmA subfamily.

Its subcellular location is the cytoplasm. The catalysed reaction is adenosine(1518)/adenosine(1519) in 16S rRNA + 4 S-adenosyl-L-methionine = N(6)-dimethyladenosine(1518)/N(6)-dimethyladenosine(1519) in 16S rRNA + 4 S-adenosyl-L-homocysteine + 4 H(+). Functionally, specifically dimethylates two adjacent adenosines (A1518 and A1519) in the loop of a conserved hairpin near the 3'-end of 16S rRNA in the 30S particle. May play a critical role in biogenesis of 30S subunits. This Corynebacterium glutamicum (strain ATCC 13032 / DSM 20300 / JCM 1318 / BCRC 11384 / CCUG 27702 / LMG 3730 / NBRC 12168 / NCIMB 10025 / NRRL B-2784 / 534) protein is Ribosomal RNA small subunit methyltransferase A.